A 643-amino-acid polypeptide reads, in one-letter code: tRNA 5-methylaminomethyl-2-thiouridine biosynthesis bifunctional protein MnmC (643 aa).

The tract at residues 1 to 223 (MPDRLVSATL…VDDRLVGDYA (223 aa)) is tRNA (mnm(5)s(2)U34)-methyltransferase. The segment at 247–643 (IGAGLAGCAV…LRARRVGSAG (397 aa)) is FAD-dependent cmnm(5)s(2)U34 oxidoreductase.

It in the N-terminal section; belongs to the methyltransferase superfamily. tRNA (mnm(5)s(2)U34)-methyltransferase family. This sequence in the C-terminal section; belongs to the DAO family. The cofactor is FAD.

The protein localises to the cytoplasm. The enzyme catalyses 5-aminomethyl-2-thiouridine(34) in tRNA + S-adenosyl-L-methionine = 5-methylaminomethyl-2-thiouridine(34) in tRNA + S-adenosyl-L-homocysteine + H(+). In terms of biological role, catalyzes the last two steps in the biosynthesis of 5-methylaminomethyl-2-thiouridine (mnm(5)s(2)U) at the wobble position (U34) in tRNA. Catalyzes the FAD-dependent demodification of cmnm(5)s(2)U34 to nm(5)s(2)U34, followed by the transfer of a methyl group from S-adenosyl-L-methionine to nm(5)s(2)U34, to form mnm(5)s(2)U34. This Burkholderia cenocepacia (strain HI2424) protein is tRNA 5-methylaminomethyl-2-thiouridine biosynthesis bifunctional protein MnmC.